The sequence spans 362 residues: Carbamoyl phosphate synthase small chain (362 aa).

Positions 1–172 are CPSase; that stretch reads MKAFLVLDNG…SKYIFGTHTG (172 aa). L-glutamine is bound by residues Ser-45, Gly-224, and Gly-226. Residues 176 to 362 form the Glutamine amidotransferase type-1 domain; that stretch reads KLAVYDYGVK…YDLVEKTKKG (187 aa). Catalysis depends on Cys-252, which acts as the Nucleophile. L-glutamine-binding residues include Leu-253, Gln-256, Asn-294, Gly-296, and Phe-297. Active-site residues include His-335 and Glu-337.

This sequence belongs to the CarA family. In terms of assembly, composed of two chains; the small (or glutamine) chain promotes the hydrolysis of glutamine to ammonia, which is used by the large (or ammonia) chain to synthesize carbamoyl phosphate. Tetramer of heterodimers (alpha,beta)4.

It catalyses the reaction hydrogencarbonate + L-glutamine + 2 ATP + H2O = carbamoyl phosphate + L-glutamate + 2 ADP + phosphate + 2 H(+). The enzyme catalyses L-glutamine + H2O = L-glutamate + NH4(+). It participates in amino-acid biosynthesis; L-arginine biosynthesis; carbamoyl phosphate from bicarbonate: step 1/1. It functions in the pathway pyrimidine metabolism; UMP biosynthesis via de novo pathway; (S)-dihydroorotate from bicarbonate: step 1/3. Functionally, small subunit of the glutamine-dependent carbamoyl phosphate synthetase (CPSase). CPSase catalyzes the formation of carbamoyl phosphate from the ammonia moiety of glutamine, carbonate, and phosphate donated by ATP, constituting the first step of 2 biosynthetic pathways, one leading to arginine and/or urea and the other to pyrimidine nucleotides. The small subunit (glutamine amidotransferase) binds and cleaves glutamine to supply the large subunit with the substrate ammonia. The chain is Carbamoyl phosphate synthase small chain from Leptospira interrogans serogroup Icterohaemorrhagiae serovar Lai (strain 56601).